We begin with the raw amino-acid sequence, 172 residues long: C-phycocyanin-2 beta subunit (172 aa).

At Asn72 the chain carries N4-methylasparagine. (2R,3E)-phycocyanobilin contacts are provided by Cys82 and Cys153.

It belongs to the phycobiliprotein family. Heterodimer of an alpha and a beta subunit, which further assembles into trimers and the trimers into hexamers. In terms of processing, contains two covalently linked bilin chromophores.

The protein localises to the cellular thylakoid membrane. Its function is as follows. Light-harvesting photosynthetic bile pigment-protein from the phycobiliprotein complex (phycobilisome, PBS). Phycocyanin is the major phycobiliprotein in the PBS rod. This is C-phycocyanin-2 beta subunit (cpcB2) from Microchaete diplosiphon (Fremyella diplosiphon).